Consider the following 384-residue polypeptide: GDSL esterase/lipase At1g71691 (384 aa).

The first 27 residues, 1–27 (MAFHFRRLCFFSALLAVVLQLLHGVSG), serve as a signal peptide directing secretion. Ser-62 acts as the Nucleophile in catalysis. Active-site residues include Asp-348 and His-351.

This sequence belongs to the 'GDSL' lipolytic enzyme family.

It is found in the secreted. The sequence is that of GDSL esterase/lipase At1g71691 from Arabidopsis thaliana (Mouse-ear cress).